We begin with the raw amino-acid sequence, 378 residues long: Alanine racemase (378 aa).

The active-site Proton acceptor; specific for D-alanine is K35. K35 is subject to N6-(pyridoxal phosphate)lysine. Position 133 (R133) interacts with substrate. Y266 serves as the catalytic Proton acceptor; specific for L-alanine. Position 314 (M314) interacts with substrate.

This sequence belongs to the alanine racemase family. The cofactor is pyridoxal 5'-phosphate.

The catalysed reaction is L-alanine = D-alanine. It participates in amino-acid biosynthesis; D-alanine biosynthesis; D-alanine from L-alanine: step 1/1. Its function is as follows. Catalyzes the interconversion of L-alanine and D-alanine. May also act on other amino acids. This chain is Alanine racemase (alr), found in Beutenbergia cavernae (strain ATCC BAA-8 / DSM 12333 / CCUG 43141 / JCM 11478 / NBRC 16432 / NCIMB 13614 / HKI 0122).